Reading from the N-terminus, the 394-residue chain is Growth-regulating factor 4 (394 aa).

One can recognise a QLQ domain in the interval 64-99 (PFTAAQYEELEQQALIYKYLVAGVPVPPDLVLPIRR). Residues 125–169 (DPEPGRCRRTDGKKWRCSKEAAPDSKYCERHMHRGRNRSRKPVET) form the WRC domain. 2 short sequence motifs (bipartite nuclear localization signal) span residues 130 to 140 (RCRRTDGKKWR) and 158 to 165 (RGRNRSRK). Residues 156–180 (MHRGRNRSRKPVETQLVAQSQPPSS) are disordered. Low complexity predominate over residues 170–180 (QLVAQSQPPSS).

The protein belongs to the GRF family. Interacts with GIF1. Interacts with GSK2. As to expression, expressed in stems. Expressed in panicles.

It is found in the nucleus. Its activity is regulated as follows. Transactivation activity is repressed by GSK2. Functionally, transcription activator that plays a role in the regulation of meristematic function in leaves, stems and inflorescences. Transcription activator that plays a regulatory role in grain development. Positively regulates grain size by promoting cell division and expansion, leading to increased grain length and width. Positively regulates the expression of genes promoting cell proliferation. Activates the expression of expansin genes to promote cell expansion and grain size. May promote grain size by activating brassinosteroid responses. Component of a network formed by the microRNA396 (miRNA396), the GRFs and their interacting factors (GIFs) acting in the regulation of meristem function, at least partially through the control of cell proliferation. Component of the miRNA396c-GRF4-GIF1 regulatory module that plays an important role in grain size determination. This is Growth-regulating factor 4 from Oryza sativa subsp. japonica (Rice).